We begin with the raw amino-acid sequence, 502 residues long: Cytochrome P450 CYP94D109 (502 aa).

A helical membrane pass occupies residues 3–23 (SLSLIFISFITLIVFLVVSAS). Cysteine 437 contributes to the heme binding site.

The protein belongs to the cytochrome P450 family. Mainly expressed in leaves and, at low levels, in roots, fruits and stems.

It is found in the membrane. It functions in the pathway steroid metabolism; cholesterol metabolism. Involved in the biosynthesis of spiroketal steroid and saponin natural products from cholesterol such as diosgenin and analogs (e.g. furostanol and spirostanol), plant defense compounds used as main precursors for the industrial production of steroid hormones. During the 5,6-spiroketalization of cholesterol, may catalyze the 27-monohydroxylation of furostanol-type steroid to an intermediate product that undergoes a stereospecific formation of the terminal heterocycle to yield diosgenin. The sequence is that of Cytochrome P450 CYP94D109 from Paris polyphylla (Daiswa polyphylla).